Reading from the N-terminus, the 302-residue chain is Bifunctional protein FolD (302 aa).

NADP(+)-binding positions include 171–173, Ser196, and Ile237; that span reads GRS.

The protein belongs to the tetrahydrofolate dehydrogenase/cyclohydrolase family. Homodimer.

The catalysed reaction is (6R)-5,10-methylene-5,6,7,8-tetrahydrofolate + NADP(+) = (6R)-5,10-methenyltetrahydrofolate + NADPH. The enzyme catalyses (6R)-5,10-methenyltetrahydrofolate + H2O = (6R)-10-formyltetrahydrofolate + H(+). Its pathway is one-carbon metabolism; tetrahydrofolate interconversion. Functionally, catalyzes the oxidation of 5,10-methylenetetrahydrofolate to 5,10-methenyltetrahydrofolate and then the hydrolysis of 5,10-methenyltetrahydrofolate to 10-formyltetrahydrofolate. The protein is Bifunctional protein FolD of Sphingopyxis alaskensis (strain DSM 13593 / LMG 18877 / RB2256) (Sphingomonas alaskensis).